The primary structure comprises 201 residues: Probable phosphopantothenoylcysteine decarboxylase (201 aa).

FMN-binding positions include 20 to 22, 45 to 47, 98 to 101, and A132; these read GSV, SKS, and SANT. Residues N134 and 164 to 166 each bind substrate; that span reads KLA. C167 serves as the catalytic Proton donor. Substrate is bound at residue M175.

The protein belongs to the HFCD (homooligomeric flavin containing Cys decarboxylase) superfamily. As to quaternary structure, homotrimer. Requires FMN as cofactor. In terms of tissue distribution, expressed in roots, shoots, leaves, flowers, developing siliques and seeds.

The enzyme catalyses N-[(R)-4-phosphopantothenoyl]-L-cysteine + H(+) = (R)-4'-phosphopantetheine + CO2. It participates in cofactor biosynthesis; coenzyme A biosynthesis; CoA from (R)-pantothenate: step 3/5. Involved in plant growth and salt and osmotic tolerance. Catalyzes the decarboxylation of 4'-phosphopantothenoylcysteine to 4'-phosphopantetheine, a key step in coenzyme A biosynthesis. The enzyme is also able to decarboxylate pantothenoylcysteine to pantothenoylcysteamine. The chain is Probable phosphopantothenoylcysteine decarboxylase (HAL3B) from Arabidopsis thaliana (Mouse-ear cress).